We begin with the raw amino-acid sequence, 362 residues long: Peptide chain release factor 1 (362 aa).

Q237 is subject to N5-methylglutamine.

It belongs to the prokaryotic/mitochondrial release factor family. In terms of processing, methylated by PrmC. Methylation increases the termination efficiency of RF1.

The protein resides in the cytoplasm. Functionally, peptide chain release factor 1 directs the termination of translation in response to the peptide chain termination codons UAG and UAA. This is Peptide chain release factor 1 from Vibrio campbellii (strain ATCC BAA-1116).